Here is a 231-residue protein sequence, read N- to C-terminus: MRNAIFIAGTDTDVGKTVASKAILQALATHNIATIGYKPVAAGSDKTEFGYRNSDALHLMKAATVDMPYEDVNPYALVLPTSPHIAAKHENVTIDYALLSNKLSKHKQNAELVVVEGAGGWRVPTSDSDCLSTWVKQERLPVILVVGIKLGCLSHAILTAEAIRADGLELVGWIANRINPGTEHYAEIIEHLEGRLGTPKLGEIPYMPKAKRQELGKFIQLDHLLEPDTVA.

13–18 contributes to the ATP binding site; it reads DVGKTV. Mg(2+) is bound at residue threonine 17. Lysine 38 is a catalytic residue. ATP is bound by residues aspartate 55, 116–119, and 176–177; these read EGAG and NR. 2 residues coordinate Mg(2+): aspartate 55 and glutamate 116.

Belongs to the dethiobiotin synthetase family. As to quaternary structure, homodimer. The cofactor is Mg(2+).

The protein localises to the cytoplasm. It carries out the reaction (7R,8S)-7,8-diammoniononanoate + CO2 + ATP = (4R,5S)-dethiobiotin + ADP + phosphate + 3 H(+). It participates in cofactor biosynthesis; biotin biosynthesis; biotin from 7,8-diaminononanoate: step 1/2. Its function is as follows. Catalyzes a mechanistically unusual reaction, the ATP-dependent insertion of CO2 between the N7 and N8 nitrogen atoms of 7,8-diaminopelargonic acid (DAPA, also called 7,8-diammoniononanoate) to form a ureido ring. In Vibrio cholerae serotype O1 (strain ATCC 39315 / El Tor Inaba N16961), this protein is ATP-dependent dethiobiotin synthetase BioD.